Here is a 100-residue protein sequence, read N- to C-terminus: Aspartyl/glutamyl-tRNA(Asn/Gln) amidotransferase subunit C (100 aa).

It belongs to the GatC family. In terms of assembly, heterotrimer of A, B and C subunits.

The catalysed reaction is L-glutamyl-tRNA(Gln) + L-glutamine + ATP + H2O = L-glutaminyl-tRNA(Gln) + L-glutamate + ADP + phosphate + H(+). It carries out the reaction L-aspartyl-tRNA(Asn) + L-glutamine + ATP + H2O = L-asparaginyl-tRNA(Asn) + L-glutamate + ADP + phosphate + 2 H(+). In terms of biological role, allows the formation of correctly charged Asn-tRNA(Asn) or Gln-tRNA(Gln) through the transamidation of misacylated Asp-tRNA(Asn) or Glu-tRNA(Gln) in organisms which lack either or both of asparaginyl-tRNA or glutaminyl-tRNA synthetases. The reaction takes place in the presence of glutamine and ATP through an activated phospho-Asp-tRNA(Asn) or phospho-Glu-tRNA(Gln). This is Aspartyl/glutamyl-tRNA(Asn/Gln) amidotransferase subunit C from Streptococcus mutans serotype c (strain ATCC 700610 / UA159).